The sequence spans 258 residues: Synapse differentiation-inducing gene protein 1 (258 aa).

The Cytoplasmic portion of the chain corresponds to 1-181; that stretch reads MDGIIEQKSM…NFLMMPPRDH (181 aa). The residue at position 137 (Ser-137) is a Phosphoserine. Residues 182–202 traverse the membrane as a helical segment; sequence LGLSVFSMLCCFWPLGIAAFY. Over 203 to 228 the chain is Extracellular; that stretch reads LSHETNKAVAKGDLHQASTSSRRALF. An intramembrane region (helical) is located at residues 229-249; sequence LAVLSITIGTGVYVGVAVALI. The Extracellular segment spans residues 250 to 258; that stretch reads AYLSKNNHL.

This sequence belongs to the CD225/Dispanin family. In terms of assembly, homodimer. Interacts with GRIA1 and GRIA2.

The protein localises to the cell membrane. Its subcellular location is the early endosome membrane. The protein resides in the postsynaptic density membrane. It localises to the synapse. It is found in the cell projection. The protein localises to the dendrite. Its subcellular location is the dendritic spine. In terms of biological role, may regulate AMPA receptor content at nascent synapses, and have a role in postsynaptic development and maturation. This is Synapse differentiation-inducing gene protein 1 (SYNDIG1) from Homo sapiens (Human).